The following is a 40-amino-acid chain: Trypsin inhibitor (40 aa).

Monomer.

The catalysed reaction is Preferential cleavage: Arg-|-Xaa, Lys-|-Xaa.. Its function is as follows. Inhibits trypsin but not chymotrypsin, papain or porcine pancreatic alpha-amylase. Has insecticidal activity against A.aegypti. Functions by inhibiting the A.aegypti midgut proteases to reduce the survival of larva and adults. This is Trypsin inhibitor from Cassia leiandra (Marimari).